Reading from the N-terminus, the 345-residue chain is UPF0228 protein MA_2656 (345 aa).

This sequence belongs to the UPF0228 family.

This is UPF0228 protein MA_2656 from Methanosarcina acetivorans (strain ATCC 35395 / DSM 2834 / JCM 12185 / C2A).